Reading from the N-terminus, the 138-residue chain is MPKYYCDYCDTFLTHDSPSVRKTHNNGRKHKENVRFYYQKWMEEQAQTLIDQTTAAFQSKPNSQMPPNAPPGLMPPPGMLPPPGGMPPGRMPPQGLPFPPPGPIPPPPGAGGMRPPHGQMHMGGPRPQMGRPPMSLRS.

The Matrin-type zinc-finger motif lies at 4–36; that stretch reads YYCDYCDTFLTHDSPSVRKTHNNGRKHKENVRF. Residues 58–138 form a disordered region; the sequence is QSKPNSQMPP…MGRPPMSLRS (81 aa). Pro residues predominate over residues 67–109; sequence PNAPPGLMPPPGMLPPPGGMPPGRMPPQGLPFPPPGPIPPPPG. A compositionally biased stretch (low complexity) spans 113–138; that stretch reads MRPPHGQMHMGGPRPQMGRPPMSLRS.

It belongs to the U1 small nuclear ribonucleoprotein C family. In terms of assembly, U1 snRNP is composed of the 7 core Sm proteins B/B', D1, D2, D3, E, F and G that assemble in a heptameric protein ring on the Sm site of the small nuclear RNA to form the core snRNP, and at least 3 U1 snRNP-specific proteins U1-70K, U1-A and U1-C. U1-C interacts with U1 snRNA and the 5' splice-site region of the pre-mRNA.

The protein localises to the nucleus. Its function is as follows. Component of the spliceosomal U1 snRNP, which is essential for recognition of the pre-mRNA 5' splice-site and the subsequent assembly of the spliceosome. U1-C is directly involved in initial 5' splice-site recognition for both constitutive and regulated alternative splicing. The interaction with the 5' splice-site seems to precede base-pairing between the pre-mRNA and the U1 snRNA. Stimulates commitment or early (E) complex formation by stabilizing the base pairing of the 5' end of the U1 snRNA and the 5' splice-site region. The chain is U1 small nuclear ribonucleoprotein C from Nematostella vectensis (Starlet sea anemone).